We begin with the raw amino-acid sequence, 443 residues long: C4-dicarboxylate transport protein (443 aa).

9 helical membrane passes run 17–37, 57–77, 92–112, 139–159, 161–181, 201–221, 234–254, 320–340, and 368–388; these read PFYS…ILLG, LVKM…IAGM, LYFL…ANVV, EQSI…GAFA, GDIL…AMVG, LVAI…AFTI, MLIG…LGAV, IYMT…LSWG, and AATL…ILGI.

The protein belongs to the dicarboxylate/amino acid:cation symporter (DAACS) (TC 2.A.23) family.

The protein localises to the cell inner membrane. Responsible for the transport of dicarboxylates such as succinate, fumarate, and malate from the periplasm across the membrane. The polypeptide is C4-dicarboxylate transport protein (Rhizobium leguminosarum bv. trifolii (strain WSM2304)).